Consider the following 275-residue polypeptide: F-box only protein 50 (275 aa).

The interval 1-67 (MEEVREGHAL…LPEPAQPSEA (67 aa)) is disordered. Positions 26 to 62 (PPSPRSPSPPPSPPPLPSPPSLPSPAAPEAPELPEPA) are enriched in pro residues. 3 positions are modified to phosphoserine: serine 31, serine 37, and serine 49. One can recognise an FBA domain in the interval 95–273 (LLLRRPLYRN…VTDSSVSVQL (179 aa)).

As to expression, expressed in the esophagus, oral cavity, skin, tongue and reproductive organs.

Its subcellular location is the cytoplasm. In terms of biological role, promotes cell proliferation. The polypeptide is F-box only protein 50 (NCCRP1) (Homo sapiens (Human)).